The sequence spans 355 residues: Peptide chain release factor 1 (355 aa).

The residue at position 231 (Gln231) is an N5-methylglutamine.

Belongs to the prokaryotic/mitochondrial release factor family. Methylated by PrmC. Methylation increases the termination efficiency of RF1.

The protein resides in the cytoplasm. Its function is as follows. Peptide chain release factor 1 directs the termination of translation in response to the peptide chain termination codons UAG and UAA. This is Peptide chain release factor 1 from Wolinella succinogenes (strain ATCC 29543 / DSM 1740 / CCUG 13145 / JCM 31913 / LMG 7466 / NCTC 11488 / FDC 602W) (Vibrio succinogenes).